A 62-amino-acid polypeptide reads, in one-letter code: Potassium channel toxin alpha-KTx 6.21 (62 aa).

The signal sequence occupies residues 1–24 (MNAKLIYLLLVVTTMMLTFDTTQA). 4 cysteine pairs are disulfide-bonded: cysteine 29-cysteine 50, cysteine 35-cysteine 55, cysteine 39-cysteine 57, and cysteine 45-cysteine 60. Valine 61 is modified (valine amide).

This sequence belongs to the short scorpion toxin superfamily. Potassium channel inhibitor family. Alpha-KTx 06 subfamily. Post-translationally, C-terminal amidation is important for activity. There is a 50-70-fold decrease in ability to inhibit Kv1.2/KCNA2 when the toxin is not amidated. This decrease may be explained by a 23-fold slower association rate (k(on)) together with a 2-fold faster dissociation rate (k(off)). Expressed by the venom gland.

It is found in the secreted. Functionally, reversible blocker of voltage-gated potassium channels with fast binding and unbinding kinetics. Has highest activity on human voltage-gated potassium channel Kv1.2/KCNA2 channels (IC(50)=0.11-0.16 nM), whereas its affinity for other channels tested was in the nanomolar range (hKv1.1/KCNA1, IC(50)=253 nM; hKv1.3/KCNA3, IC(50)=91 nM; and hKCa3.1/KCNN4, IC(50)=70 nM). The chain is Potassium channel toxin alpha-KTx 6.21 from Urodacus yaschenkoi (Inland robust scorpion).